A 291-amino-acid polypeptide reads, in one-letter code: Nucleotide-binding protein LGAS_1315 (291 aa).

Position 13-20 (13-20) interacts with ATP; that stretch reads GMSGAGKT. 63 to 66 serves as a coordination point for GTP; sequence DLRV.

This sequence belongs to the RapZ-like family.

Displays ATPase and GTPase activities. The protein is Nucleotide-binding protein LGAS_1315 of Lactobacillus gasseri (strain ATCC 33323 / DSM 20243 / BCRC 14619 / CIP 102991 / JCM 1131 / KCTC 3163 / NCIMB 11718 / NCTC 13722 / AM63).